A 237-amino-acid polypeptide reads, in one-letter code: Urease accessory protein UreF (237 aa).

Belongs to the UreF family. UreD, UreF and UreG form a complex that acts as a GTP-hydrolysis-dependent molecular chaperone, activating the urease apoprotein by helping to assemble the nickel containing metallocenter of UreC. The UreE protein probably delivers the nickel.

It is found in the cytoplasm. Functionally, required for maturation of urease via the functional incorporation of the urease nickel metallocenter. In Methylibium petroleiphilum (strain ATCC BAA-1232 / LMG 22953 / PM1), this protein is Urease accessory protein UreF.